We begin with the raw amino-acid sequence, 78 residues long: Conotoxin ba1890.8 (78 aa).

An N-terminal signal peptide occupies residues Met-1 to Ala-22. The propeptide occupies His-23–Arg-61. Residues Ile-25–Ser-78 are disordered. Residues Asn-34–Glu-43 are compositionally biased toward polar residues. Residues Ile-47 to His-72 are compositionally biased toward basic and acidic residues. The residue at position 62 (Gln-62) is a Pyrrolidone carboxylic acid.

The protein belongs to the conotoxin H superfamily. In terms of tissue distribution, expressed by the venom duct.

Its subcellular location is the secreted. Its function is as follows. Probable toxin. In Conus bayani (Bayan's cone), this protein is Conotoxin ba1890.8.